Consider the following 207-residue polypeptide: Uridine kinase (207 aa).

Residue 11-18 (GGSGSGKT) coordinates ATP.

It belongs to the uridine kinase family.

The protein resides in the cytoplasm. It catalyses the reaction uridine + ATP = UMP + ADP + H(+). The catalysed reaction is cytidine + ATP = CMP + ADP + H(+). It participates in pyrimidine metabolism; CTP biosynthesis via salvage pathway; CTP from cytidine: step 1/3. It functions in the pathway pyrimidine metabolism; UMP biosynthesis via salvage pathway; UMP from uridine: step 1/1. The sequence is that of Uridine kinase from Staphylococcus haemolyticus (strain JCSC1435).